Here is a 351-residue protein sequence, read N- to C-terminus: Methylthioribose-1-phosphate isomerase (351 aa).

Substrate-binding positions include 51 to 53 (RGA), Arg-94, and Gln-199. Residue Asp-240 is the Proton donor of the active site. Position 250–251 (250–251 (NK)) interacts with substrate.

The protein belongs to the EIF-2B alpha/beta/delta subunits family. MtnA subfamily. In terms of assembly, homodimer.

It catalyses the reaction 5-(methylsulfanyl)-alpha-D-ribose 1-phosphate = 5-(methylsulfanyl)-D-ribulose 1-phosphate. Its pathway is amino-acid biosynthesis; L-methionine biosynthesis via salvage pathway; L-methionine from S-methyl-5-thio-alpha-D-ribose 1-phosphate: step 1/6. Catalyzes the interconversion of methylthioribose-1-phosphate (MTR-1-P) into methylthioribulose-1-phosphate (MTRu-1-P). The sequence is that of Methylthioribose-1-phosphate isomerase from Bacillus thuringiensis (strain Al Hakam).